Consider the following 510-residue polypeptide: 2,3-bisphosphoglycerate-independent phosphoglycerate mutase (510 aa).

Mn(2+) is bound by residues aspartate 13 and serine 63. The active-site Phosphoserine intermediate is serine 63. Residues histidine 124, 154 to 155 (RD), arginine 186, arginine 192, 262 to 265 (RADR), and lysine 334 each bind substrate. 5 residues coordinate Mn(2+): aspartate 401, histidine 405, aspartate 442, histidine 443, and histidine 461.

The protein belongs to the BPG-independent phosphoglycerate mutase family. Monomer. Mn(2+) serves as cofactor.

It catalyses the reaction (2R)-2-phosphoglycerate = (2R)-3-phosphoglycerate. The protein operates within carbohydrate degradation; glycolysis; pyruvate from D-glyceraldehyde 3-phosphate: step 3/5. Its function is as follows. Catalyzes the interconversion of 2-phosphoglycerate and 3-phosphoglycerate. This Vibrio vulnificus (strain YJ016) protein is 2,3-bisphosphoglycerate-independent phosphoglycerate mutase.